A 102-amino-acid chain; its full sequence is Small ribosomal subunit protein uS10 (102 aa).

It belongs to the universal ribosomal protein uS10 family. Part of the 30S ribosomal subunit.

Involved in the binding of tRNA to the ribosomes. The sequence is that of Small ribosomal subunit protein uS10 from Bartonella henselae (strain ATCC 49882 / DSM 28221 / CCUG 30454 / Houston 1) (Rochalimaea henselae).